The primary structure comprises 347 residues: Selenide, water dikinase (347 aa).

Residue Cys17 is part of the active site. ATP is bound by residues Lys20 and 48–50 (TRD). Residue Asp51 participates in Mg(2+) binding. Residues Asp68, Asp91, and 139 to 141 (GHS) each bind ATP. Asp91 provides a ligand contact to Mg(2+). Asp227 is a Mg(2+) binding site.

It belongs to the selenophosphate synthase 1 family. Class I subfamily. In terms of assembly, homodimer. Mg(2+) is required as a cofactor.

It catalyses the reaction hydrogenselenide + ATP + H2O = selenophosphate + AMP + phosphate + 2 H(+). Functionally, synthesizes selenophosphate from selenide and ATP. The chain is Selenide, water dikinase from Salmonella typhimurium (strain LT2 / SGSC1412 / ATCC 700720).